Reading from the N-terminus, the 313-residue chain is tRNA dimethylallyltransferase (313 aa).

11-18 (GPTASGKT) lines the ATP pocket. 13–18 (TASGKT) is a substrate binding site. Interaction with substrate tRNA regions lie at residues 36 to 39 (DSAL), 160 to 164 (QRINR), and 241 to 246 (RCVGYR).

Belongs to the IPP transferase family. In terms of assembly, monomer. Mg(2+) serves as cofactor.

The enzyme catalyses adenosine(37) in tRNA + dimethylallyl diphosphate = N(6)-dimethylallyladenosine(37) in tRNA + diphosphate. Functionally, catalyzes the transfer of a dimethylallyl group onto the adenine at position 37 in tRNAs that read codons beginning with uridine, leading to the formation of N6-(dimethylallyl)adenosine (i(6)A). The polypeptide is tRNA dimethylallyltransferase (Haemophilus ducreyi (strain 35000HP / ATCC 700724)).